A 221-amino-acid chain; its full sequence is Putative 5'(3')-deoxyribonucleotidase R824 (221 aa).

2 residues coordinate Mg(2+): aspartate 16 and aspartate 18. Residue aspartate 18 is the Nucleophile of the active site. 3 residues coordinate phosphate: aspartate 18, serine 103, and lysine 138. Mg(2+) is bound at residue aspartate 149.

The protein belongs to the 5'(3')-deoxyribonucleotidase family. The cofactor is Mg(2+).

Functionally, dephosphorylates the 5' and 2'(3')-phosphates of deoxyribonucleotides. In Acanthamoeba polyphaga mimivirus (APMV), this protein is Putative 5'(3')-deoxyribonucleotidase R824.